We begin with the raw amino-acid sequence, 382 residues long: Probable protein phosphatase 2C 65 (382 aa).

Positions 47–337 (HVSMSIKQGK…DDCAVVVLYL (291 aa)) constitute a PPM-type phosphatase domain. D83 and G84 together coordinate Mn(2+). Residues 107 to 126 (KIRSSKSAGDENIENNSSQS) are disordered. Mn(2+) is bound by residues D282 and D328.

It belongs to the PP2C family. Requires Mg(2+) as cofactor. It depends on Mn(2+) as a cofactor.

It carries out the reaction O-phospho-L-seryl-[protein] + H2O = L-seryl-[protein] + phosphate. The enzyme catalyses O-phospho-L-threonyl-[protein] + H2O = L-threonyl-[protein] + phosphate. The chain is Probable protein phosphatase 2C 65 from Arabidopsis thaliana (Mouse-ear cress).